The following is a 300-amino-acid chain: Cation-efflux pump FieF (300 aa).

Residues 24–44 (LLIKIFAWWYTGSVSILAALV) traverse the membrane as a helical segment. Residues Asp-45 and Asp-49 each contribute to the Zn(2+) site. 2 consecutive transmembrane segments (helical) span residues 82–102 (AALA…LTSI) and 114–134 (PGVG…LVTF). Residues His-153 and Asp-157 each contribute to the Zn(2+) site. 2 consecutive transmembrane segments (helical) span residues 156-176 (SDVM…YGWH) and 178-198 (ADAL…LRMG).

It belongs to the cation diffusion facilitator (CDF) transporter (TC 2.A.4) family. FieF subfamily. Homodimer.

The protein resides in the cell inner membrane. The catalysed reaction is Zn(2+)(in) + H(+)(out) = Zn(2+)(out) + H(+)(in). It catalyses the reaction Cd(2+)(in) + H(+)(out) = Cd(2+)(out) + H(+)(in). It carries out the reaction Fe(2+)(in) + H(+)(out) = Fe(2+)(out) + H(+)(in). In terms of biological role, divalent metal cation transporter which exports Zn(2+), Cd(2+) and possibly Fe(2+). May be involved in zinc and iron detoxification by efflux. This Salmonella schwarzengrund (strain CVM19633) protein is Cation-efflux pump FieF.